The primary structure comprises 432 residues: Adenosylhomocysteinase (432 aa).

3 residues coordinate substrate: Thr-57, Asp-131, and Glu-156. 157-159 (TTT) is an NAD(+) binding site. Ser-183 bears the Phosphoserine mark. 2 residues coordinate substrate: Lys-186 and Asp-190. The residue at position 186 (Lys-186) is an N6-(2-hydroxyisobutyryl)lysine. At Tyr-193 the chain carries Phosphotyrosine. NAD(+) contacts are provided by residues 222–227 (GDVGKG), Glu-243, Asn-248, 299–301 (IGH), Asn-346, His-353, Lys-426, 426–430 (KPDHY), and Tyr-430.

Belongs to the adenosylhomocysteinase family. Homotetramer. Interaction with AHCYL1. The cofactor is NAD(+).

The protein localises to the cytoplasm. It is found in the melanosome. Its subcellular location is the nucleus. The protein resides in the endoplasmic reticulum. The catalysed reaction is S-adenosyl-L-homocysteine + H2O = L-homocysteine + adenosine. It participates in amino-acid biosynthesis; L-homocysteine biosynthesis; L-homocysteine from S-adenosyl-L-homocysteine: step 1/1. Catalyzes the hydrolysis of S-adenosyl-L-homocysteine to form adenosine and homocysteine. Binds copper ions. The chain is Adenosylhomocysteinase (Ahcy) from Rattus norvegicus (Rat).